We begin with the raw amino-acid sequence, 343 residues long: tRNA N6-adenosine threonylcarbamoyltransferase (343 aa).

Fe cation-binding residues include H111 and H115. Substrate-binding positions include 133–137 (AVSGG), D166, G179, D183, and N273. D301 lines the Fe cation pocket.

Belongs to the KAE1 / TsaD family. The cofactor is Fe(2+).

The protein resides in the cytoplasm. It carries out the reaction L-threonylcarbamoyladenylate + adenosine(37) in tRNA = N(6)-L-threonylcarbamoyladenosine(37) in tRNA + AMP + H(+). Its function is as follows. Required for the formation of a threonylcarbamoyl group on adenosine at position 37 (t(6)A37) in tRNAs that read codons beginning with adenine. Is involved in the transfer of the threonylcarbamoyl moiety of threonylcarbamoyl-AMP (TC-AMP) to the N6 group of A37, together with TsaE and TsaB. TsaD likely plays a direct catalytic role in this reaction. The polypeptide is tRNA N6-adenosine threonylcarbamoyltransferase (Geotalea uraniireducens (strain Rf4) (Geobacter uraniireducens)).